We begin with the raw amino-acid sequence, 563 residues long: Cysteine--tRNA ligase, chloroplastic/mitochondrial (563 aa).

Cys91 is a Zn(2+) binding site. Residue Gly92 coordinates L-cysteine. A 'HIGH' region motif is present at residues 93–103; the sequence is VTAYDLSHIGH. Residue Thr131 participates in L-cysteine binding. Positions 136-139 match the 'KIIK' region motif; the sequence is KIIA. Residues Cys271, His296, and Glu300 each coordinate Zn(2+). His296 contributes to the L-cysteine binding site. The 'KMSKS' region signature appears at 328-332; the sequence is KMSKS. ATP is bound at residue Lys331.

The protein belongs to the class-I aminoacyl-tRNA synthetase family. Requires Zn(2+) as cofactor.

The protein resides in the plastid. The protein localises to the chloroplast. It localises to the mitochondrion. It catalyses the reaction tRNA(Cys) + L-cysteine + ATP = L-cysteinyl-tRNA(Cys) + AMP + diphosphate. In terms of biological role, required for female gametophyte development. Is necessary for the fusion of central cell nuclei and programmed cell death (PCD) of the antipodals. The sequence is that of Cysteine--tRNA ligase, chloroplastic/mitochondrial from Arabidopsis thaliana (Mouse-ear cress).